Reading from the N-terminus, the 238-residue chain is Ribosomal RNA small subunit methyltransferase G (238 aa).

Residues Gly-77, Phe-82, 128 to 129, and Arg-147 contribute to the S-adenosyl-L-methionine site; that span reads AE.

Belongs to the methyltransferase superfamily. RNA methyltransferase RsmG family.

It localises to the cytoplasm. Functionally, specifically methylates the N7 position of guanine in position 535 of 16S rRNA. This chain is Ribosomal RNA small subunit methyltransferase G, found in Listeria innocua serovar 6a (strain ATCC BAA-680 / CLIP 11262).